The primary structure comprises 204 residues: Pre-mRNA leakage protein 1 (204 aa).

The FHA domain maps to 104–172; that stretch reads YLVGRELGHS…NGTCLNNVVI (69 aa).

In terms of assembly, belongs to the pre-mRNA retention and splicing (RES) complex composed of at least BUD13, IST3 and PML1.

The protein resides in the cytoplasm. It is found in the nucleus. Required for efficient splicing and pre-mRNA nuclear retention. The sequence is that of Pre-mRNA leakage protein 1 (PML1) from Saccharomyces cerevisiae (strain ATCC 204508 / S288c) (Baker's yeast).